The chain runs to 320 residues: Ribosome production factor 2 homolog (320 aa).

In terms of domain architecture, Brix spans 30–234; sequence RTMLFLDGRK…IRRTKIASED (205 aa). A disordered region spans residues 268–320; it reads LGKQQTGSIQTRRVKALRKTPEEKKENRQRKKVALKAAAAEALASQGNNPFSS. Over residues 302–311 the composition is skewed to low complexity; it reads LKAAAAEALA.

This sequence belongs to the RPF2 family.

It is found in the nucleus. It localises to the nucleolus. Its function is as follows. Required for normal assembly of the mitotic spindle. May be involved in both centrosome-dependent and centrosome-independent spindle assembly programs. The chain is Ribosome production factor 2 homolog from Drosophila melanogaster (Fruit fly).